Reading from the N-terminus, the 264-residue chain is GTP cyclohydrolase FolE2 (264 aa).

The protein belongs to the GTP cyclohydrolase IV family.

It carries out the reaction GTP + H2O = 7,8-dihydroneopterin 3'-triphosphate + formate + H(+). It participates in cofactor biosynthesis; 7,8-dihydroneopterin triphosphate biosynthesis; 7,8-dihydroneopterin triphosphate from GTP: step 1/1. Functionally, converts GTP to 7,8-dihydroneopterin triphosphate. This Akkermansia muciniphila (strain ATCC BAA-835 / DSM 22959 / JCM 33894 / BCRC 81048 / CCUG 64013 / CIP 107961 / Muc) protein is GTP cyclohydrolase FolE2.